A 154-amino-acid polypeptide reads, in one-letter code: Superoxide dismutase [Cu-Zn] (154 aa).

The Cu cation site is built by His47, His49, and His64. A disulfide bridge links Cys58 with Cys147. Positions 64, 72, 81, and 84 each coordinate Zn(2+). Position 121 (His121) interacts with Cu cation. Arg144 provides a ligand contact to substrate.

This sequence belongs to the Cu-Zn superoxide dismutase family. In terms of assembly, homodimer. Requires Cu cation as cofactor. Zn(2+) serves as cofactor.

The protein localises to the cytoplasm. It carries out the reaction 2 superoxide + 2 H(+) = H2O2 + O2. In terms of biological role, destroys radicals which are normally produced within the cells and which are toxic to biological systems. This chain is Superoxide dismutase [Cu-Zn] (SOD1), found in Podospora anserina (Pleurage anserina).